Here is an 82-residue protein sequence, read N- to C-terminus: Small ribosomal subunit protein bS16 (82 aa).

Belongs to the bacterial ribosomal protein bS16 family.

This chain is Small ribosomal subunit protein bS16, found in Shewanella sp. (strain ANA-3).